The sequence spans 547 residues: Chaperonin GroEL (547 aa).

ATP contacts are provided by residues threonine 30–proline 33, lysine 51, aspartate 87–threonine 91, glycine 415, asparagine 479–alanine 481, and aspartate 495.

It belongs to the chaperonin (HSP60) family. In terms of assembly, forms a cylinder of 14 subunits composed of two heptameric rings stacked back-to-back. Interacts with the co-chaperonin GroES.

It is found in the cytoplasm. The enzyme catalyses ATP + H2O + a folded polypeptide = ADP + phosphate + an unfolded polypeptide.. Its function is as follows. Together with its co-chaperonin GroES, plays an essential role in assisting protein folding. The GroEL-GroES system forms a nano-cage that allows encapsulation of the non-native substrate proteins and provides a physical environment optimized to promote and accelerate protein folding. The protein is Chaperonin GroEL of Marinomonas sp. (strain MWYL1).